We begin with the raw amino-acid sequence, 248 residues long: ATP synthase subunit a, chloroplastic (248 aa).

4 helical membrane passes run 96–116 (VPFIGTMFLFIFASNWSGALL), 135–155 (INTTVALALLTSVAYFYAGLY), 200–220 (LVVAVLVSLVPLIVPVPMMLL), and 221–241 (GLFTSGIQALIFATLAAAYIG).

It belongs to the ATPase A chain family. F-type ATPases have 2 components, CF(1) - the catalytic core - and CF(0) - the membrane proton channel. CF(1) has five subunits: alpha(3), beta(3), gamma(1), delta(1), epsilon(1). CF(0) has four main subunits: a, b, b' and c.

Its subcellular location is the plastid. It localises to the chloroplast thylakoid membrane. In terms of biological role, key component of the proton channel; it plays a direct role in the translocation of protons across the membrane. This is ATP synthase subunit a, chloroplastic from Adiantum capillus-veneris (Maidenhair fern).